Here is a 282-residue protein sequence, read N- to C-terminus: Pantothenate synthetase (282 aa).

Residue 30 to 37 (MGYLHQGH) coordinates ATP. The active-site Proton donor is H37. Q61 is a (R)-pantoate binding site. Position 61 (Q61) interacts with beta-alanine. 147–150 (GQKD) is an ATP binding site. Q153 serves as a coordination point for (R)-pantoate. ATP-binding positions include V176 and 184–187 (MSSR).

It belongs to the pantothenate synthetase family. In terms of assembly, homodimer.

It is found in the cytoplasm. The enzyme catalyses (R)-pantoate + beta-alanine + ATP = (R)-pantothenate + AMP + diphosphate + H(+). The protein operates within cofactor biosynthesis; (R)-pantothenate biosynthesis; (R)-pantothenate from (R)-pantoate and beta-alanine: step 1/1. Catalyzes the condensation of pantoate with beta-alanine in an ATP-dependent reaction via a pantoyl-adenylate intermediate. The protein is Pantothenate synthetase of Geotalea daltonii (strain DSM 22248 / JCM 15807 / FRC-32) (Geobacter daltonii).